The following is a 407-amino-acid chain: Phosphopentomutase (407 aa).

Mn(2+) contacts are provided by Asp10, Asp306, His311, Asp347, His348, and His359.

It belongs to the phosphopentomutase family. Mn(2+) is required as a cofactor.

The protein localises to the cytoplasm. The enzyme catalyses 2-deoxy-alpha-D-ribose 1-phosphate = 2-deoxy-D-ribose 5-phosphate. It catalyses the reaction alpha-D-ribose 1-phosphate = D-ribose 5-phosphate. It functions in the pathway carbohydrate degradation; 2-deoxy-D-ribose 1-phosphate degradation; D-glyceraldehyde 3-phosphate and acetaldehyde from 2-deoxy-alpha-D-ribose 1-phosphate: step 1/2. Isomerase that catalyzes the conversion of deoxy-ribose 1-phosphate (dRib-1-P) and ribose 1-phosphate (Rib-1-P) to deoxy-ribose 5-phosphate (dRib-5-P) and ribose 5-phosphate (Rib-5-P), respectively. This chain is Phosphopentomutase, found in Yersinia enterocolitica serotype O:8 / biotype 1B (strain NCTC 13174 / 8081).